The following is a 1227-amino-acid chain: Splicing factor 3B subunit 3 (1227 aa).

The protein belongs to the RSE1 family. As to quaternary structure, identified in the spliceosome A complex; remains associated with the spliceosome throughout the splicing process. Component of the spliceosome B complex. Identified in the spliceosome C complex. Identified in the spliceosome E complex. Component of the U11/U12 snRNPs that are part of the U12-type spliceosome. Component of splicing factor SF3B complex. Identified in the SAGA transcription regulatory histone acetylation (HAT) complex; the interaction is RNA-independent.

Its subcellular location is the nucleus. In terms of biological role, involved in pre-mRNA splicing as a component of the splicing factor SF3B complex, a constituent of the spliceosome. SF3B complex is required for 'A' complex assembly formed by the stable binding of U2 snRNP to the branchpoint sequence (BPS) in pre-mRNA. Sequence independent binding of SF3A/SF3B complex upstream of the branch site is essential, it may anchor U2 snRNP to the pre-mRNA. May also be involved in the assembly of the 'E' complex. Also belongs to the minor U12-dependent spliceosome, which is involved in the splicing of rare class of nuclear pre-mRNA intron. This chain is Splicing factor 3B subunit 3, found in Drosophila melanogaster (Fruit fly).